A 198-amino-acid chain; its full sequence is Carnitine operon protein CaiE (198 aa).

A disordered region spans residues 179 to 198; the sequence is VEENRPRLKGTTDVKPKSAQ. Residues 180-198 are compositionally biased toward basic and acidic residues; that stretch reads EENRPRLKGTTDVKPKSAQ.

The protein belongs to the transferase hexapeptide repeat family.

The protein operates within amine and polyamine metabolism; carnitine metabolism. Its function is as follows. Overproduction of CaiE stimulates the activity of CaiB and CaiD. In Salmonella typhi, this protein is Carnitine operon protein CaiE.